The primary structure comprises 1314 residues: E3 ubiquitin-protein ligase RNF123 (1314 aa).

Ala-2 is modified (N-acetylalanine). The region spanning 74–254 is the B30.2/SPRY domain; it reads VDSEDNESQG…VAFNFGSRPL (181 aa). The disordered stretch occupies residues 460–483; the sequence is HRSSRESRDGKEAREETTEERQRR. Residues 462-483 are compositionally biased toward basic and acidic residues; the sequence is SSRESRDGKEAREETTEERQRR. Position 675 is a phosphoserine (Ser-675). Arg-683 is modified (asymmetric dimethylarginine). The interaction with NFKB1 stretch occupies residues 968-974; that stretch reads WILVRLW. Residues Cys-1254, Cys-1257, Cys-1269, His-1271, Cys-1274, Cys-1277, Cys-1288, and Cys-1291 each coordinate Zn(2+). The RING-type zinc-finger motif lies at 1254–1292; the sequence is CPICYAHPISAVFQPCGHKSCKACINQHLMNNKDCFFCK.

Component of the KPC complex composed of RNF123/KPC1 and UBAC1/KPC2. Interacts with UBAC1 and CDKN1B via its N-terminal domain. Interacts with RIGI (via N-terminus) and IFIH1 (via N-terminus). Post-translationally, ubiquitinated, leading to its degradation. Deubiquitinated by USP19, thereby stimulating CDKN1B ubiquitin-dependent degradation.

The protein localises to the cytoplasm. The catalysed reaction is S-ubiquitinyl-[E2 ubiquitin-conjugating enzyme]-L-cysteine + [acceptor protein]-L-lysine = [E2 ubiquitin-conjugating enzyme]-L-cysteine + N(6)-ubiquitinyl-[acceptor protein]-L-lysine.. It functions in the pathway protein modification; protein ubiquitination. In terms of biological role, catalytic subunit of the KPC complex that acts as E3 ubiquitin-protein ligase. Promotes the ubiquitination and proteasome-mediated degradation of CDKN1B which is the cyclin-dependent kinase inhibitor at the G0-G1 transition of the cell cycle. Also acts as a key regulator of the NF-kappa-B signaling by promoting maturation of the NFKB1 component of NF-kappa-B: acts by catalyzing ubiquitination of the NFKB1 p105 precursor, leading to limited proteasomal degradation of NFKB1 p105 and generation of the active NFKB1 p50 subunit. Functions also as an inhibitor of innate antiviral signaling mediated by RIGI and IFIH1 independently of its E3 ligase activity. Interacts with the N-terminal CARD domains of RIGI and IFIH1 and competes with the downstream adapter MAVS. This chain is E3 ubiquitin-protein ligase RNF123 (Rnf123), found in Mus musculus (Mouse).